We begin with the raw amino-acid sequence, 326 residues long: MTNSSMFCPIYRDLEPFTYFFYLVYLIGIIGSCFATWAFIQKSTNHRCVSIYLINLLTADFLLTLALPVKIVVDLGVAPWKLRIFHCQVTACLIYINMYLSIIFLAFVSIDRCLQLVHSCKIYRIQEPGFAKMISAVVWLMVLLIMVPNMVIPIKNIKEKSNVGCMEFKREFGKNWHLLTNFICVAIFLNFSAIILISNFLVIRQLYRNRDNANYPSVKSALLNILLVTASYIICFVPYHAVRIPYTLSQTEVISDCSTRIALFKAKEATLLLAVSNLCFDPILYYHLSKAFRLKVTETFASPQKMKAREEKPRRENDVQSTGSAC.

Topologically, residues 1–19 (MTNSSMFCPIYRDLEPFTY) are extracellular. Residues 20-40 (FFYLVYLIGIIGSCFATWAFI) traverse the membrane as a helical segment. The Cytoplasmic portion of the chain corresponds to 41–48 (QKSTNHRC). Residues 49–69 (VSIYLINLLTADFLLTLALPV) form a helical membrane-spanning segment. Topologically, residues 70–89 (KIVVDLGVAPWKLRIFHCQV) are extracellular. C87 and C165 form a disulfide bridge. The helical transmembrane segment at 90–110 (TACLIYINMYLSIIFLAFVSI) threads the bilayer. Over 111 to 133 (DRCLQLVHSCKIYRIQEPGFAKM) the chain is Cytoplasmic. The chain crosses the membrane as a helical span at residues 134-154 (ISAVVWLMVLLIMVPNMVIPI). Topologically, residues 155–182 (KNIKEKSNVGCMEFKREFGKNWHLLTNF) are extracellular. Residues 183–203 (ICVAIFLNFSAIILISNFLVI) form a helical membrane-spanning segment. Over 204–221 (RQLYRNRDNANYPSVKSA) the chain is Cytoplasmic. The helical transmembrane segment at 222–242 (LLNILLVTASYIICFVPYHAV) threads the bilayer. The Extracellular portion of the chain corresponds to 243–268 (RIPYTLSQTEVISDCSTRIALFKAKE). The chain crosses the membrane as a helical span at residues 269–289 (ATLLLAVSNLCFDPILYYHLS). Over 290-326 (KAFRLKVTETFASPQKMKAREEKPRRENDVQSTGSAC) the chain is Cytoplasmic. The disordered stretch occupies residues 305–326 (KMKAREEKPRRENDVQSTGSAC). Over residues 307–318 (KAREEKPRREND) the composition is skewed to basic and acidic residues.

It belongs to the G-protein coupled receptor 1 family.

The protein localises to the cell membrane. G-protein coupled receptor for Big LEN, a 16-amino acid neuropeptide produced from the precursor protein, proSAAS (encoded by PCSK1N). Acts through a G(i)-alpha-mediated pathway in response to Big LEN. Big LEN-GPR171 system plays an important role in regulating feeding and metabolism. Also plays a role in modulating fear and anxiety-like behaviors in the basolateral amygdala. Big LEN-GPR171 modulates the mu-type opioid receptor signaling and antinociception. Acts as a negative regulator T cell function. The polypeptide is G-protein coupled receptor 171 (Rattus norvegicus (Rat)).